We begin with the raw amino-acid sequence, 509 residues long: Hexokinase-4, chloroplastic (509 aa).

Residues methionine 1–arginine 37 constitute a chloroplast transit peptide. Residues serine 45–alanine 496 form the Hexokinase domain. Residues threonine 100–valine 238 are hexokinase small subdomain. Glycine 114, threonine 115, and asparagine 116 together coordinate ADP. 4 residues coordinate D-glucose: threonine 204, lysine 205, asparagine 239, and aspartate 240. Positions asparagine 239–aspartate 485 are hexokinase large subdomain. Threonine 263 contributes to the ADP binding site. Residues asparagine 266, glutamate 294, and glutamate 324 each coordinate D-glucose. Glycine 450 is an ADP binding site.

It belongs to the hexokinase family. In terms of tissue distribution, expressed in roots, leaves, flowers, immature seeds, endosperm and seed coat.

It localises to the plastid. The protein resides in the chloroplast stroma. It carries out the reaction a D-hexose + ATP = a D-hexose 6-phosphate + ADP + H(+). The enzyme catalyses D-fructose + ATP = D-fructose 6-phosphate + ADP + H(+). It catalyses the reaction D-glucose + ATP = D-glucose 6-phosphate + ADP + H(+). It participates in carbohydrate metabolism; hexose metabolism. The protein operates within carbohydrate degradation; glycolysis; D-glyceraldehyde 3-phosphate and glycerone phosphate from D-glucose: step 1/4. Its function is as follows. Fructose and glucose phosphorylating enzyme. The sequence is that of Hexokinase-4, chloroplastic (HXK4) from Oryza sativa subsp. japonica (Rice).